We begin with the raw amino-acid sequence, 198 residues long: MALRCKTPAATCAARSRRSVRVSAHKGAFEQAQVAAAAFVAAAVIAAPANAGVVLQQPVLKKAFQDDTPAAPPPKREFRGLAPPALPQSDAPNVAAEKPKKAEVVESTSGGLDPRSVALPGALALTIGGFVAASKIDGSFNDWFMEAVVRDSNNYAGYEATLKSENGVTFPKVAAGGTKKVKAATGSKKGGFPFGGKK.

The transit peptide at 1–51 (MALRCKTPAATCAARSRRSVRVSAHKGAFEQAQVAAAAFVAAAVIAAPANA) directs the protein to the chloroplast. Over 52-115 (GVVLQQPVLK…ESTSGGLDPR (64 aa)) the chain is Lumenal. Positions 65 to 111 (QDDTPAAPPPKREFRGLAPPALPQSDAPNVAAEKPKKAEVVESTSGG) are disordered. The chain crosses the membrane as a helical span at residues 116 to 136 (SVALPGALALTIGGFVAASKI). The Stromal segment spans residues 137–198 (DGSFNDWFME…KGGFPFGGKK (62 aa)).

This sequence belongs to the petO family. Post-translationally, phosphorylated.

It is found in the plastid. The protein resides in the chloroplast thylakoid membrane. Its function is as follows. The cytochrome b6-f complex functions in the linear cross-membrane transport of electrons between photosystem II and I, as well as in cyclic electron flow around photosystem I. The chain is Cytochrome b6-f complex subunit petO, chloroplastic (PETO) from Chlamydomonas reinhardtii (Chlamydomonas smithii).